The following is a 399-amino-acid chain: Phosphoglycerate kinase (399 aa).

Substrate-binding positions include 22–24 (DFN), Arg38, 61–64 (HLGR), Arg120, and Arg153. ATP is bound by residues Lys204, Glu326, and 352 to 355 (GGDT).

This sequence belongs to the phosphoglycerate kinase family. Monomer.

It is found in the cytoplasm. It catalyses the reaction (2R)-3-phosphoglycerate + ATP = (2R)-3-phospho-glyceroyl phosphate + ADP. Its pathway is carbohydrate degradation; glycolysis; pyruvate from D-glyceraldehyde 3-phosphate: step 2/5. This is Phosphoglycerate kinase from Geobacter sp. (strain M21).